A 408-amino-acid chain; its full sequence is Phosphoglycerate kinase (408 aa).

Substrate contacts are provided by residues 24-26 (DLN), R39, 62-65 (HLGR), R121, and R161. Residues K211, G307, E338, and 364–367 (GGDS) contribute to the ATP site.

The protein belongs to the phosphoglycerate kinase family. In terms of assembly, monomer.

Its subcellular location is the cytoplasm. The catalysed reaction is (2R)-3-phosphoglycerate + ATP = (2R)-3-phospho-glyceroyl phosphate + ADP. The protein operates within carbohydrate degradation; glycolysis; pyruvate from D-glyceraldehyde 3-phosphate: step 2/5. This Pseudarthrobacter chlorophenolicus (strain ATCC 700700 / DSM 12829 / CIP 107037 / JCM 12360 / KCTC 9906 / NCIMB 13794 / A6) (Arthrobacter chlorophenolicus) protein is Phosphoglycerate kinase.